The following is a 965-amino-acid chain: Valine--tRNA ligase (965 aa).

Positions Met1–Glu12 are enriched in polar residues. A disordered region spans residues Met1 to Glu23. The 'HIGH' region motif lies at Pro56–His66. The 'KMSKS' region signature appears at Lys568 to Ser572. Position 571 (Lys571) interacts with ATP. The stretch at Met893–Glu960 forms a coiled coil.

It belongs to the class-I aminoacyl-tRNA synthetase family. ValS type 1 subfamily. As to quaternary structure, monomer.

It is found in the cytoplasm. The enzyme catalyses tRNA(Val) + L-valine + ATP = L-valyl-tRNA(Val) + AMP + diphosphate. Functionally, catalyzes the attachment of valine to tRNA(Val). As ValRS can inadvertently accommodate and process structurally similar amino acids such as threonine, to avoid such errors, it has a 'posttransfer' editing activity that hydrolyzes mischarged Thr-tRNA(Val) in a tRNA-dependent manner. This Photorhabdus laumondii subsp. laumondii (strain DSM 15139 / CIP 105565 / TT01) (Photorhabdus luminescens subsp. laumondii) protein is Valine--tRNA ligase.